The following is a 238-amino-acid chain: Capsular polysaccharide phosphotransferase eps5J (238 aa).

This sequence belongs to the stealth family.

The chain is Capsular polysaccharide phosphotransferase eps5J (eps5J) from Streptococcus thermophilus.